A 395-amino-acid chain; its full sequence is Imidazolonepropionase (395 aa).

Residues His-72 and His-74 each contribute to the Fe(3+) site. Zn(2+)-binding residues include His-72 and His-74. 4-imidazolone-5-propanoate is bound by residues Arg-81, Tyr-144, and His-174. An N-formimidoyl-L-glutamate-binding site is contributed by Tyr-144. His-231 provides a ligand contact to Fe(3+). Residue His-231 participates in Zn(2+) binding. 4-imidazolone-5-propanoate is bound at residue Glu-234. Residue Asp-306 coordinates Fe(3+). Asp-306 contributes to the Zn(2+) binding site.

This sequence belongs to the metallo-dependent hydrolases superfamily. HutI family. It depends on Zn(2+) as a cofactor. Requires Fe(3+) as cofactor.

The protein localises to the cytoplasm. The catalysed reaction is 4-imidazolone-5-propanoate + H2O = N-formimidoyl-L-glutamate. It participates in amino-acid degradation; L-histidine degradation into L-glutamate; N-formimidoyl-L-glutamate from L-histidine: step 3/3. Catalyzes the hydrolytic cleavage of the carbon-nitrogen bond in imidazolone-5-propanoate to yield N-formimidoyl-L-glutamate. It is the third step in the universal histidine degradation pathway. This is Imidazolonepropionase from Pyrobaculum arsenaticum (strain DSM 13514 / JCM 11321 / PZ6).